The chain runs to 154 residues: Aspartate carbamoyltransferase regulatory chain (154 aa).

The Zn(2+) site is built by C109, C114, C138, and C141.

Belongs to the PyrI family. Contains catalytic and regulatory chains. Requires Zn(2+) as cofactor.

Functionally, involved in allosteric regulation of aspartate carbamoyltransferase. This is Aspartate carbamoyltransferase regulatory chain from Aliivibrio fischeri (strain ATCC 700601 / ES114) (Vibrio fischeri).